Here is a 362-residue protein sequence, read N- to C-terminus: Holliday junction branch migration complex subunit RuvB (362 aa).

The segment at 1–27 (MANIEKTEFHVPAPVSAAGNQKSSLGN) is disordered. The segment at 13 to 206 (APVSAAGNQK…FGFTAQMEFY (194 aa)) is large ATPase domain (RuvB-L). ATP is bound by residues Leu-45, Arg-46, Gly-87, Lys-90, Thr-91, Thr-92, 153 to 155 (EDF), Arg-196, Tyr-206, and Arg-243. Residue Thr-91 coordinates Mg(2+). Residues 207 to 277 (EVEDLTKVVV…AAQAALVVFD (71 aa)) form a small ATPAse domain (RuvB-S) region. The segment at 280–362 (EMGLDRLDRA…EPPEGIIGSL (83 aa)) is head domain (RuvB-H). Positions 335 and 340 each coordinate DNA.

It belongs to the RuvB family. Homohexamer. Forms an RuvA(8)-RuvB(12)-Holliday junction (HJ) complex. HJ DNA is sandwiched between 2 RuvA tetramers; dsDNA enters through RuvA and exits via RuvB. An RuvB hexamer assembles on each DNA strand where it exits the tetramer. Each RuvB hexamer is contacted by two RuvA subunits (via domain III) on 2 adjacent RuvB subunits; this complex drives branch migration. In the full resolvosome a probable DNA-RuvA(4)-RuvB(12)-RuvC(2) complex forms which resolves the HJ.

The protein localises to the cytoplasm. The catalysed reaction is ATP + H2O = ADP + phosphate + H(+). The RuvA-RuvB-RuvC complex processes Holliday junction (HJ) DNA during genetic recombination and DNA repair, while the RuvA-RuvB complex plays an important role in the rescue of blocked DNA replication forks via replication fork reversal (RFR). RuvA specifically binds to HJ cruciform DNA, conferring on it an open structure. The RuvB hexamer acts as an ATP-dependent pump, pulling dsDNA into and through the RuvAB complex. RuvB forms 2 homohexamers on either side of HJ DNA bound by 1 or 2 RuvA tetramers; 4 subunits per hexamer contact DNA at a time. Coordinated motions by a converter formed by DNA-disengaged RuvB subunits stimulates ATP hydrolysis and nucleotide exchange. Immobilization of the converter enables RuvB to convert the ATP-contained energy into a lever motion, pulling 2 nucleotides of DNA out of the RuvA tetramer per ATP hydrolyzed, thus driving DNA branch migration. The RuvB motors rotate together with the DNA substrate, which together with the progressing nucleotide cycle form the mechanistic basis for DNA recombination by continuous HJ branch migration. Branch migration allows RuvC to scan DNA until it finds its consensus sequence, where it cleaves and resolves cruciform DNA. This chain is Holliday junction branch migration complex subunit RuvB, found in Corynebacterium diphtheriae (strain ATCC 700971 / NCTC 13129 / Biotype gravis).